A 440-amino-acid chain; its full sequence is GTPase Der (440 aa).

2 EngA-type G domains span residues 4-168 and 177-352; these read PIVA…NPED and IKVA…NQNA. GTP is bound by residues 10 to 17, 57 to 61, 120 to 123, 183 to 190, 230 to 234, and 295 to 298; these read GRPNVGKS, DTGGI, NKVD, GKPNVGKS, DTAGI, and NKWD. The KH-like domain occupies 353–437; that stretch reads MRIPTGALNE…PIRFILREKT (85 aa).

This sequence belongs to the TRAFAC class TrmE-Era-EngA-EngB-Septin-like GTPase superfamily. EngA (Der) GTPase family. In terms of assembly, associates with the 50S ribosomal subunit.

In terms of biological role, GTPase that plays an essential role in the late steps of ribosome biogenesis. The protein is GTPase Der of Alkaliphilus oremlandii (strain OhILAs) (Clostridium oremlandii (strain OhILAs)).